Consider the following 1194-residue polypeptide: Rho-associated protein kinase let-502 (1194 aa).

The Protein kinase domain maps to 68-330; the sequence is FRQLKVIGRG…VDEIRNHKFF (263 aa). Residues 74-82 and Lys97 each bind ATP; that span reads IGRGAFGEV. Asp190 (proton acceptor) is an active-site residue. An AGC-kinase C-terminal domain is found at 331-402; sequence KNDEWTFETL…SNEYSPVKKL (72 aa). Coiled coils occupy residues 436-844 and 875-933; these read EEQY…MAKR and GRIL…EYPQ. Positions 784–846 constitute a RhoBD domain; sequence EQNLKHIENQ…LEEEMAKRQP (63 aa). The PH domain maps to 961–1171; that stretch reads IQIDGWLSLR…SQLRRFIEAS (211 aa). The Phorbol-ester/DAG-type zinc-finger motif lies at 1085–1138; sequence RHDFQELSYHTRTYCDDCGKKLSDFIRPTPAFECKNCHYKTHKEHIAQGTITMC.

It belongs to the protein kinase superfamily. AGC Ser/Thr protein kinase family. Interacts with rho-1. Requires Mg(2+) as cofactor.

The protein localises to the cytoplasm. It is found in the cytoskeleton. It localises to the cleavage furrow. The catalysed reaction is L-seryl-[protein] + ATP = O-phospho-L-seryl-[protein] + ADP + H(+). It catalyses the reaction L-threonyl-[protein] + ATP = O-phospho-L-threonyl-[protein] + ADP + H(+). With respect to regulation, activated by rho-1 binding. Functionally, negatively regulates mel-11 to relieve the inhibition of mlc-4, allowing contraction of the circumferentially oriented microfilaments in epidermal cells and thereby regulating myosin II contractility during spermathecal contraction, cleavage furrow contraction in early embryos, and embryonic elongation and morphogenesis. Required for P-cell migration. May also play a role in oocyte cellularization. This chain is Rho-associated protein kinase let-502, found in Caenorhabditis briggsae.